Consider the following 948-residue polypeptide: Peroxisomal ATPase pex6 (948 aa).

An ATP-binding site is contributed by 695-702 (GPPGTGKT).

It belongs to the AAA ATPase family. As to quaternary structure, interacts with PEX1; forming the PEX1-PEX6 AAA ATPase complex, which is composed of a heterohexamer formed by a trimer of PEX1-PEX6 dimers.

The protein localises to the cytoplasm. Its subcellular location is the cytosol. It is found in the peroxisome membrane. It catalyses the reaction ATP + H2O = ADP + phosphate + H(+). Component of the PEX1-PEX6 AAA ATPase complex, a protein dislocase complex that mediates the ATP-dependent extraction of the PEX5 receptor from peroxisomal membranes, an essential step for PEX5 recycling. Specifically recognizes PEX5 monoubiquitinated at 'Cys-6', and pulls it out of the peroxisome lumen through the PEX2-PEX10-PEX12 retrotranslocation channel. Extraction by the PEX1-PEX6 AAA ATPase complex is accompanied by unfolding of the TPR repeats and release of bound cargo from PEX5. In Schizosaccharomyces pombe (strain 972 / ATCC 24843) (Fission yeast), this protein is Peroxisomal ATPase pex6 (pex6).